A 209-amino-acid polypeptide reads, in one-letter code: MSNVCIMDHPLIQHKIGIMRMKTTSTKEFRDLVAEVAMLIYYEASRNLPLADKEVETPLTKAIVKEIEGKKLCVVPILRAGMHMADGILNLTPNAKVGHIGLYRNEETLEPVEYFCKLPSDAPDREIFVVDPMLATGGSAIAAITLLKRRGIEKIRFLCLIAAPEGLKKLQEAHPDVDVFIGALDERLNEQGYILPGLGDAGDRIYGTK.

Residues Arg-79, Arg-104, and 131–139 contribute to the 5-phospho-alpha-D-ribose 1-diphosphate site; that span reads DPMLATGGS. Uracil contacts are provided by residues Ile-194 and 199 to 201; that span reads GDA. Asp-200 is a binding site for 5-phospho-alpha-D-ribose 1-diphosphate.

The protein belongs to the UPRTase family. Requires Mg(2+) as cofactor.

The enzyme catalyses UMP + diphosphate = 5-phospho-alpha-D-ribose 1-diphosphate + uracil. It participates in pyrimidine metabolism; UMP biosynthesis via salvage pathway; UMP from uracil: step 1/1. With respect to regulation, allosterically activated by GTP. Functionally, catalyzes the conversion of uracil and 5-phospho-alpha-D-ribose 1-diphosphate (PRPP) to UMP and diphosphate. This chain is Uracil phosphoribosyltransferase, found in Lachnoclostridium phytofermentans (strain ATCC 700394 / DSM 18823 / ISDg) (Clostridium phytofermentans).